The primary structure comprises 128 residues: 2-iminobutanoate/2-iminopropanoate deaminase (128 aa).

Belongs to the RutC family.

Its subcellular location is the cytoplasm. The enzyme catalyses 2-iminobutanoate + H2O = 2-oxobutanoate + NH4(+). It catalyses the reaction 2-iminopropanoate + H2O = pyruvate + NH4(+). Functionally, catalyzes the hydrolytic deamination of enamine/imine intermediates that form during the course of normal metabolism. May facilitate the release of ammonia from these potentially toxic reactive metabolites, reducing their impact on cellular components. It may act on enamine/imine intermediates formed by several types of pyridoxal-5'-phosphate-dependent dehydratases including L-threonine dehydratase. Preferentially digests Leu and Met in cooperation with L-amino acid oxidase, but digests Phe poorly. The sequence is that of 2-iminobutanoate/2-iminopropanoate deaminase from Dermatophagoides farinae (American house dust mite).